Consider the following 595-residue polypeptide: NADH-quinone oxidoreductase subunit C/D (595 aa).

An NADH dehydrogenase I subunit C region spans residues 1–186; sequence MVTDNSKATD…TPYFLNNAKQ (186 aa). Positions 210-595 are NADH dehydrogenase I subunit D; sequence DFMFLNLGPN…IDIVMADTDR (386 aa).

In the N-terminal section; belongs to the complex I 30 kDa subunit family. This sequence in the C-terminal section; belongs to the complex I 49 kDa subunit family. As to quaternary structure, NDH-1 is composed of 13 different subunits. Subunits NuoB, CD, E, F, and G constitute the peripheral sector of the complex.

The protein localises to the cell inner membrane. The enzyme catalyses a quinone + NADH + 5 H(+)(in) = a quinol + NAD(+) + 4 H(+)(out). Functionally, NDH-1 shuttles electrons from NADH, via FMN and iron-sulfur (Fe-S) centers, to quinones in the respiratory chain. The immediate electron acceptor for the enzyme in this species is believed to be ubiquinone. Couples the redox reaction to proton translocation (for every two electrons transferred, four hydrogen ions are translocated across the cytoplasmic membrane), and thus conserves the redox energy in a proton gradient. This Psychrobacter sp. (strain PRwf-1) protein is NADH-quinone oxidoreductase subunit C/D.